The chain runs to 344 residues: MIKILGIESSCDDTAVSIITENREILSNIIISQNTEHAVFGGVVPEIAARSHLSHLDKALKNVLKESNTKLTDISTIAATSGPGLIGGVIVGSMFARSLSSALKKPFIAINHLEGHALTARLTDNIPYPYLLLLASGGHCQFVAVLGLGKYKILGSTIDDAVGEAFDKVAKMLNLAFPGGPEIEKRAKLGDPHKYKFPKPIINSGNCNMSFSGLKTAVRTLIMTLKEINDTVINDIAASFQFTIGEILSSKVQDAIRAYEQITNNFDKKNIVIAGGVAANKYLQKILSSCAKTYGYRLIYPPIHLCTDNAAMIAYAGLERYNNKLFTPLNFCPKARWSLEDISN.

The Fe cation site is built by histidine 112 and histidine 116. Substrate is bound by residues 134–138, aspartate 167, glycine 180, and asparagine 280; that span reads LASGG. Aspartate 308 serves as a coordination point for Fe cation.

It belongs to the KAE1 / TsaD family. It depends on Fe(2+) as a cofactor.

The protein localises to the cytoplasm. It carries out the reaction L-threonylcarbamoyladenylate + adenosine(37) in tRNA = N(6)-L-threonylcarbamoyladenosine(37) in tRNA + AMP + H(+). Its function is as follows. Required for the formation of a threonylcarbamoyl group on adenosine at position 37 (t(6)A37) in tRNAs that read codons beginning with adenine. Is involved in the transfer of the threonylcarbamoyl moiety of threonylcarbamoyl-AMP (TC-AMP) to the N6 group of A37, together with TsaE and TsaB. TsaD likely plays a direct catalytic role in this reaction. The sequence is that of tRNA N6-adenosine threonylcarbamoyltransferase from Rickettsia conorii (strain ATCC VR-613 / Malish 7).